The chain runs to 181 residues: 3-hydroxyanthranilate 3,4-dioxygenase (181 aa).

Arginine 46 lines the O2 pocket. Positions 50, 56, and 95 each coordinate Fe cation. Position 56 (glutamate 56) interacts with substrate. Positions 99 and 109 each coordinate substrate.

This sequence belongs to the 3-HAO family. It depends on Fe(2+) as a cofactor.

Its subcellular location is the cytoplasm. It catalyses the reaction 3-hydroxyanthranilate + O2 = (2Z,4Z)-2-amino-3-carboxymuconate 6-semialdehyde. It participates in cofactor biosynthesis; NAD(+) biosynthesis; quinolinate from L-kynurenine: step 3/3. In terms of biological role, catalyzes the oxidative ring opening of 3-hydroxyanthranilate to 2-amino-3-carboxymuconate semialdehyde, which spontaneously cyclizes to quinolinate. The protein is 3-hydroxyanthranilate 3,4-dioxygenase of Mycosarcoma maydis (Corn smut fungus).